The following is a 279-amino-acid chain: Undecaprenyl-diphosphatase (279 aa).

The next 7 helical transmembrane spans lie at 10–30, 48–68, 96–116, 128–148, 203–223, 229–249, and 259–279; these read FICF…FLPI, LGVS…IYYF, LFLY…LIKL, GLFS…LSEI, SFLV…FSLF, IDII…IFAI, and NNTL…LTTL.

The protein belongs to the UppP family.

The protein resides in the cell inner membrane. The catalysed reaction is di-trans,octa-cis-undecaprenyl diphosphate + H2O = di-trans,octa-cis-undecaprenyl phosphate + phosphate + H(+). In terms of biological role, catalyzes the dephosphorylation of undecaprenyl diphosphate (UPP). Confers resistance to bacitracin. This Prochlorococcus marinus (strain NATL2A) protein is Undecaprenyl-diphosphatase.